Reading from the N-terminus, the 297-residue chain is uncharacterized protein (297 aa).

Helical transmembrane passes span 14–34 (LFLM…FLKF), 55–75 (LLLG…IYFF), 81–101 (FYFG…AGAL), 110–130 (AIIL…RVAF), 135–155 (LSTL…KLLF), 163–183 (IVGA…YGSI), and 208–228 (LIMT…SKCF).

The protein resides in the cell membrane. This is an uncharacterized protein from Methanocaldococcus jannaschii (strain ATCC 43067 / DSM 2661 / JAL-1 / JCM 10045 / NBRC 100440) (Methanococcus jannaschii).